The primary structure comprises 1034 residues: Condensin complex subunit 3 (1034 aa).

7 HEAT repeats span residues 95 to 132 (SPVN…NLPE), 139 to 176 (DLFD…PSDP), 178 to 213 (CPVS…SLPK), 242 to 279 (LTIA…QYSE), 281 to 317 (DVLD…LVQN), 439 to 476 (TSLI…PIVT), and 618 to 655 (DFAR…LFGM). Polar residues predominate over residues 663-672 (TNPDDSQCKA). Residues 663–693 (TNPDDSQCKAQENADEDISEQEKPGSVDENL) form a disordered region. HEAT repeat units lie at residues 703-740 (ATVN…SGRL), 785-823 (CFAE…DLTR), and 878-915 (ENST…SGRE). Residues 909 to 949 (QLRSGREEHRVSKETEPQVSKETEDRTNLQENEEGKQKDEA) show a composition bias toward basic and acidic residues. Positions 909–1034 (QLRSGREEHR…LSKLLNEEAN (126 aa)) are disordered. Basic residues predominate over residues 964-984 (RGKATKGRRKGPAAAATRRKA). Over residues 985 to 999 (SKAEEAEAEMERQEE) the composition is skewed to basic and acidic residues.

The protein belongs to the CND3 (condensin subunit 3) family. As to quaternary structure, component of the condensin complex, which contains the XCAP-E/SMC2 and XCAP-C/SMC4 heterodimer, and three non SMC subunits that probably regulate the complex: XCAP-H/NCAPH, XCAP-D2/NCAPD2 and XCAP-G/NCAPG. In terms of processing, phosphorylated by cdk1. Its phosphorylation, as well as that of XCAP-D2 and XCAP-H subunits, activates the condensin complex and is required for chromosome condensation.

It is found in the nucleus. The protein localises to the cytoplasm. Its subcellular location is the chromosome. Its function is as follows. Regulatory subunit of the condensin complex, a complex required for conversion of interphase chromatin into mitotic-like condense chromosomes. The condensin complex probably introduces positive supercoils into relaxed DNA in the presence of type I topoisomerases and converts nicked DNA into positive knotted forms in the presence of type II topoisomerase. This is Condensin complex subunit 3 (ncapg) from Xenopus laevis (African clawed frog).